A 228-amino-acid chain; its full sequence is Large ribosomal subunit protein bL25 (228 aa).

The segment at 198–228 (AAIAEAQSAEAAEEKAEAEAEATNEKNDTEE) is disordered. A compositionally biased stretch (basic and acidic residues) spans 209–228 (AEEKAEAEAEATNEKNDTEE).

It belongs to the bacterial ribosomal protein bL25 family. CTC subfamily. Part of the 50S ribosomal subunit; part of the 5S rRNA/L5/L18/L25 subcomplex. Contacts the 5S rRNA. Binds to the 5S rRNA independently of L5 and L18.

Functionally, this is one of the proteins that binds to the 5S RNA in the ribosome where it forms part of the central protuberance. The chain is Large ribosomal subunit protein bL25 from Methylorubrum populi (strain ATCC BAA-705 / NCIMB 13946 / BJ001) (Methylobacterium populi).